A 926-amino-acid polypeptide reads, in one-letter code: Translation initiation factor IF-2 (926 aa).

Disordered regions lie at residues 1 to 185 (MTDS…EEVE) and 200 to 299 (EDKA…RRRG). Low complexity-rich tracts occupy residues 13–24 (TGKKTLTLKPTG) and 70–96 (APAT…AAPQ). The span at 110 to 133 (TNQYSQQRHPGQQNRPQASSQPSR) shows a compositional bias: polar residues. The segment covering 151–185 (MDARRRALAEAQVREVEDAKRRAEEEVRRQAEEVE) has biased composition (basic and acidic residues). Over residues 211–251 (APEPVAEPVAPVAETPRAADPAPRAPSPAGAKPAAGAPAPS) the composition is skewed to low complexity. One can recognise a tr-type G domain in the interval 424–591 (SRPPVVTIMG…AVLLQAEILD (168 aa)). Residues 433–440 (GHVDHGKT) form a G1 region. A GTP-binding site is contributed by 433–440 (GHVDHGKT). The tract at residues 458-462 (GITQH) is G2. A G3 region spans residues 479 to 482 (DTPG). GTP is bound by residues 479 to 483 (DTPGH) and 533 to 536 (NKID). The interval 533–536 (NKID) is G4. The tract at residues 569 to 571 (SAK) is G5.

It belongs to the TRAFAC class translation factor GTPase superfamily. Classic translation factor GTPase family. IF-2 subfamily.

The protein localises to the cytoplasm. Its function is as follows. One of the essential components for the initiation of protein synthesis. Protects formylmethionyl-tRNA from spontaneous hydrolysis and promotes its binding to the 30S ribosomal subunits. Also involved in the hydrolysis of GTP during the formation of the 70S ribosomal complex. This is Translation initiation factor IF-2 from Allorhizobium ampelinum (strain ATCC BAA-846 / DSM 112012 / S4) (Agrobacterium vitis (strain S4)).